The sequence spans 316 residues: uncharacterized protein (316 aa).

Positions 16–89 (ERLDKFLARA…IPINIIYEDE (74 aa)) constitute an S4 RNA-binding domain. Residue D140 is part of the active site.

It belongs to the pseudouridine synthase RluA family.

The enzyme catalyses a uridine in RNA = a pseudouridine in RNA. This is an uncharacterized protein from Aquifex aeolicus (strain VF5).